The following is a 214-amino-acid chain: Large ribosomal subunit protein uL1 (214 aa).

The protein belongs to the universal ribosomal protein uL1 family. Part of the 50S ribosomal subunit.

Binds directly to 23S rRNA. Probably involved in E site tRNA release. Its function is as follows. Protein L1 is also a translational repressor protein, it controls the translation of its operon by binding to its mRNA. This chain is Large ribosomal subunit protein uL1, found in Methanoregula boonei (strain DSM 21154 / JCM 14090 / 6A8).